Reading from the N-terminus, the 506-residue chain is Exoglucanase (506 aa).

Positions 1–18 are cleaved as a signal peptide; that stretch reads MFPRSILLALSLTAVALG. A catalytic region spans residues 19-450; that stretch reads QQVGTNMAEN…IKFGDINSTF (432 aa). E227 functions as the Nucleophile in the catalytic mechanism. The active-site Proton donor is E232. N-linked (GlcNAc...) asparagine glycosylation is present at N308. Residues 405–426 are disordered; that stretch reads ASPSQPGISRGTCSRDSGKPED. Residues 406-419 are compositionally biased toward polar residues; sequence SPSQPGISRGTCSR. The N-linked (GlcNAc...) asparagine glycan is linked to N447. The tract at residues 449–472 is disordered; the sequence is TFNNNGGGGGNPSPTTTRPNSPAQ. The interval 451 to 473 is linker; that stretch reads NNNGGGGGNPSPTTTRPNSPAQT. Residues 460 to 470 show a composition bias toward low complexity; that stretch reads PSPTTTRPNSP. In terms of domain architecture, CBM1 spans 470–506; it reads PAQTMWGQCGGQGWTGPTACQSPSTCHVINDFYSQCF. 2 disulfide bridges follow: C478–C495 and C489–C505.

It belongs to the glycosyl hydrolase 7 (cellulase C) family.

It carries out the reaction Hydrolysis of (1-&gt;4)-beta-D-glucosidic linkages in cellulose and cellotetraose, releasing cellobiose from the non-reducing ends of the chains.. The biological conversion of cellulose to glucose generally requires three types of hydrolytic enzymes: (1) Endoglucanases which cut internal beta-1,4-glucosidic bonds; (2) Exocellobiohydrolases that cut the disaccharide cellobiose from the non-reducing end of the cellulose polymer chain; (3) Beta-1,4-glucosidases which hydrolyze the cellobiose and other short cello-oligosaccharides to glucose. This is Exoglucanase (cel2) from Agaricus bisporus (White button mushroom).